The sequence spans 319 residues: Transcription factor jun-1 (319 aa).

Disordered regions lie at residues 1-52 (MEED…EKES) and 216-264 (NGVN…CRQK). Residues 8–19 (PPSSSTSSESPE) show a composition bias toward low complexity. A compositionally biased stretch (basic residues) spans 28 to 38 (PTRRRKNSKKD). Positions 244 to 285 (KKKLERKRARNRQAATKCRQKKMDRIKELEEQVLHEKHRGQR) are basic motif. The bZIP domain occupies 244 to 307 (KKKLERKRAR…EHFRRTVEHH (64 aa)). Residues 286–293 (LDAELLEL) are leucine-zipper.

The protein belongs to the bZIP family. Jun subfamily. In terms of assembly, heterodimer; with fos-1. In terms of tissue distribution, isoform a, isoform b, isoform c and isoform d are expressed in the spermatheca.

It localises to the nucleus. Functionally, transcription factor that recognizes and binds to the AP-1 non-canonical enhancer heptamer motif 5'-TTAGTCA-3'. Required for ovulation. Controls plc-1 expression in the spermatheca to regulate spermathecal valve dilation. In Caenorhabditis elegans, this protein is Transcription factor jun-1.